The primary structure comprises 385 residues: GDP-D-glucose phosphorylase 1 (385 aa).

Catalysis depends on histidine 218, which acts as the Tele-GMP-histidine intermediate.

This sequence belongs to the GDPGP1 family.

It localises to the cytoplasm. It catalyses the reaction GDP-alpha-D-glucose + phosphate = alpha-D-glucose 1-phosphate + GDP + H(+). Its function is as follows. Specific and highly efficient GDP-D-glucose phosphorylase regulating the levels of GDP-D-glucose in cells. The polypeptide is GDP-D-glucose phosphorylase 1 (GDPGP1) (Homo sapiens (Human)).